A 115-amino-acid polypeptide reads, in one-letter code: Large ribosomal subunit protein bL19 (115 aa).

This sequence belongs to the bacterial ribosomal protein bL19 family.

This protein is located at the 30S-50S ribosomal subunit interface and may play a role in the structure and function of the aminoacyl-tRNA binding site. The sequence is that of Large ribosomal subunit protein bL19 from Desulforamulus reducens (strain ATCC BAA-1160 / DSM 100696 / MI-1) (Desulfotomaculum reducens).